The sequence spans 470 residues: Cannabinoid receptor 1 (470 aa).

Residues 1 to 121 (MKSILDGLAD…TPSQQLVIAA (121 aa)) lie on the Extracellular side of the membrane. A required for mitochondrial localization region spans residues 2–23 (KSILDGLADTTFRTITTDLLYL). N78 and N84 each carry an N-linked (GlcNAc...) asparagine glycan. A helical membrane pass occupies residues 122-142 (LSIILGTFTVLENMLVLVVIV). Residues 143–154 (QSRSLRCRPSYH) lie on the Cytoplasmic side of the membrane. Residues 155-175 (FIGSLAVADLLGSVIFVYSFV) form a helical membrane-spanning segment. Residues 176–187 (DFHVFHRKDSPN) lie on the Extracellular side of the membrane. A helical membrane pass occupies residues 188–208 (VFLFKLGGVTASFTASVGSLF). The Cytoplasmic segment spans residues 209 to 232 (LTAIDRYISIHRPMSYKRIVTRTK). A helical transmembrane segment spans residues 233 to 253 (AVIAFCMMWTIAIVIAVLPLF). Topologically, residues 254-277 (GWNCIKLRSVCSDIFPLIDETYLM) are extracellular. The chain crosses the membrane as a helical span at residues 278–298 (FWIGVTSVLLLFIVYAYMYIL). The Cytoplasmic portion of the chain corresponds to 299–344 (WKAHNHAVRMLQRGTQKSIIVHTSEDGKVHITRPDQTRMDIRLAKT). Residues 345–365 (LVLILVVLIICWGPLMAIMVY) form a helical membrane-spanning segment. Topologically, residues 366–377 (DVFGKINKTIKT) are extracellular. N372 is a glycosylation site (N-linked (GlcNAc...) asparagine). Residues 378 to 398 (VFAFCSVLCLLNSTVNPIIYA) form a helical membrane-spanning segment. Residues 399–470 (LRSKDLRNAF…VSTDTSAEAV (72 aa)) are Cytoplasmic-facing. C415 carries the S-palmitoyl cysteine lipid modification.

This sequence belongs to the G-protein coupled receptor 1 family. Post-translationally, palmitoylation at Cys-415 is important for recruitment at both plasma membrane and lipid rafts and association with G protein alpha subunits. In terms of tissue distribution, expressed in neurons, especially in the olfactory bulbs, telencephalic pallium, and hypothalamus and also in the midbrain and hindbrain (in the mesencephalic tegmentum and dorsolateral rhombencephalon). Expressed also in the spinal cord.

Its subcellular location is the cell membrane. The protein resides in the mitochondrion outer membrane. It is found in the cell projection. The protein localises to the axon. It localises to the presynapse. Its function is as follows. G-protein coupled receptor for cannabinoids. Mediates many cannabinoid-induced effects in the central nervous system (CNS), as well as in peripheral tissues. Regulates cellular respiration and energy production in response to cannabinoids. Signaling typically involves reduction in cyclic AMP. This is Cannabinoid receptor 1 (cnr1) from Xenopus laevis (African clawed frog).